Reading from the N-terminus, the 465-residue chain is MHEILTVTFGRKSNFCWTHFWNTQESYFVYDPNDHAKVNVNTNFRVLKKRDPEAIVTVPRECIYDTPIEFGNTRKNWLEELNESSGGKGTAWDGKLTQIMQTPVDVHPYQEALWSRDEIHEGNAIESEYELPSIRPKSVKYWSDFNRLFLDTEYLFPVNCSELNSSDFSFQLGVERFHDFDKQFNVWDEGLRPLVEECDSVQGFQAAIDIDTPWGGFASEYMKVVQDELGECRVPTWVYGIREPIQSDSSATIDNHFGKLNEALSLSQLNGSCSQYFPLCTISQGDDLWASSAKINLAIESFTLPTRVYGSSCYRMKDIESKLQSEGRGFIHNLNFKAKNYSSKEWALVSSASFVNVAQDYSQQNNCLFGVVRSPKDNQGLLEGKNYNASSISKIVNIQNLGLPSLETVPEGLRTLDTVFVEATNDGQINSHIQGLTKSLNRRFVSFVDQDELEEIREILSSYII.

Phosphoserine is present on serine 446.

This sequence belongs to the misato family.

The protein resides in the mitochondrion. Involved in the partitioning of the mitochondrial organelle and mitochondrial DNA (mtDNA) inheritance. The polypeptide is Protein dml1 (dml1) (Schizosaccharomyces pombe (strain 972 / ATCC 24843) (Fission yeast)).